The sequence spans 368 residues: p21-activated protein kinase-interacting protein 1-like (368 aa).

5 WD repeats span residues 45 to 82 (AHTA…EHGA), 85 to 123 (HHDG…CLKT), 126 to 165 (AHKG…SAFI), 207 to 245 (AFTK…CVCE), and 248 to 289 (AHEN…IESP).

It localises to the nucleus. The protein resides in the nucleolus. Negatively regulates the PAK1 kinase. PAK1 is a member of the PAK kinase family, which has been shown to play a positive role in the regulation of signaling pathways involving MAPK8 and RELA. PAK1 exists as an inactive homodimer, which is activated by binding of small GTPases such as CDC42 to an N-terminal regulatory domain. PAK1IP1 also binds to the N-terminus of PAK1, and inhibits the specific activation of PAK1 by CDC42. May be involved in ribosomal large subunit assembly. The chain is p21-activated protein kinase-interacting protein 1-like (pak1ip1) from Danio rerio (Zebrafish).